We begin with the raw amino-acid sequence, 191 residues long: Elongation factor P (191 aa).

This sequence belongs to the elongation factor P family.

It is found in the cytoplasm. Its pathway is protein biosynthesis; polypeptide chain elongation. Involved in peptide bond synthesis. Stimulates efficient translation and peptide-bond synthesis on native or reconstituted 70S ribosomes in vitro. Probably functions indirectly by altering the affinity of the ribosome for aminoacyl-tRNA, thus increasing their reactivity as acceptors for peptidyl transferase. This Ralstonia pickettii (strain 12J) protein is Elongation factor P.